A 132-amino-acid polypeptide reads, in one-letter code: Small ribosomal subunit protein uS8c (132 aa).

It belongs to the universal ribosomal protein uS8 family. As to quaternary structure, part of the 30S ribosomal subunit.

It is found in the plastid. The protein resides in the chloroplast. One of the primary rRNA binding proteins, it binds directly to 16S rRNA central domain where it helps coordinate assembly of the platform of the 30S subunit. In Zygnema circumcarinatum (Green alga), this protein is Small ribosomal subunit protein uS8c (rps8).